The sequence spans 143 residues: Large ribosomal subunit protein uL11 (143 aa).

The protein belongs to the universal ribosomal protein uL11 family. As to quaternary structure, part of the ribosomal stalk of the 50S ribosomal subunit. Interacts with L10 and the large rRNA to form the base of the stalk. L10 forms an elongated spine to which L12 dimers bind in a sequential fashion forming a multimeric L10(L12)X complex. Post-translationally, one or more lysine residues are methylated.

Functionally, forms part of the ribosomal stalk which helps the ribosome interact with GTP-bound translation factors. The polypeptide is Large ribosomal subunit protein uL11 (Borreliella afzelii (strain PKo) (Borrelia afzelii)).